Consider the following 631-residue polypeptide: Beta-galactosidase-1-like protein 3 (631 aa).

The active-site Proton donor is the E203. E277 (nucleophile) is an active-site residue.

It belongs to the glycosyl hydrolase 35 family.

The protein is Beta-galactosidase-1-like protein 3 (Glb1l3) of Rattus norvegicus (Rat).